A 565-amino-acid polypeptide reads, in one-letter code: MAAIESFDNIYLDLSKESGKSRFAENGLGWKPAGGGEAFTLDSSNIGGAQWSRAARGYEVKILLRSSGVVQLDGFHQEDYERLSKIFKNWYSVNLENKEHSLRGWNWGKAEFSKAELTFNVQNRPAFEIPYSEISNTNLAGRNEIAVEFAGNDGGKSNGHSGTGGKGKKASAGKDQLVEVRFYIPGTTTRKEAEGGEAGSDADEEEKNAVTLFYDTLIEKAEIGETAGDTIATFLDVLHLTPRGRFDIDMYDASFRLRGKTYDYKIQYDAIKKFMVLPKPDDLHFLLCIGLDPPLRQGQTRYPFVVMQFKADEEVTLDLNITEEELNGKYKDKLQSHYEQPLHQVVAYIFKGLANKKVTTPAKDFTTHRQQYGIKCSIKASEGFLYCLEKAFMFVPKPATYISYEQTQSITFSRVGGAVSALSTFDITVHMKNGAGSSQFSNINREDLKALEEFFKLKGLRVKNEIDDDTNLIAAALGDDDMASSDEEAVGPKADRGSADEDEESVDEDFQAESESDVAEEYDSNHESDGSGSEESDVDNRVDDEDEDMDDDEGEKRPKKKKKTA.

2 disordered regions span residues 151–173 and 477–565; these read GNDG…ASAG and LGDD…KKTA. The span at 152 to 165 shows a compositional bias: gly residues; the sequence is NDGGKSNGHSGTGG. 3 stretches are compositionally biased toward acidic residues: residues 478-489, 500-522, and 532-553; these read GDDDMASSDEEA, DEDE…AEEY, and GSEE…DDDE.

Belongs to the SSRP1 family. In terms of assembly, forms a stable heterodimer with ctc-2/spt16. The dimer of ctc-1 and ctc-2 weakly associates with multiple molecules of nhp-1/nhp6 to form the FACT complex.

The protein resides in the nucleus. It is found in the chromosome. Its function is as follows. Component of the FACT complex, a general chromatin factor that acts to reorganize nucleosomes. The FACT complex is involved in multiple processes that require DNA as a template such as mRNA elongation, DNA replication and DNA repair. During transcription elongation the FACT complex acts as a histone chaperone that both destabilizes and restores nucleosomal structure. It facilitates the passage of RNA polymerase II and transcription by promoting the dissociation of one histone H2A-H2B dimer from the nucleosome, then subsequently promotes the reestablishment of the nucleosome following the passage of RNA polymerase II. This is FACT complex subunit ctc-1 (ctc-1) from Neurospora crassa (strain ATCC 24698 / 74-OR23-1A / CBS 708.71 / DSM 1257 / FGSC 987).